Here is a 131-residue protein sequence, read N- to C-terminus: Fluoride-specific ion channel FluC (131 aa).

3 helical membrane passes run 3–23 (AAAN…GAWL), 34–54 (IFLT…LLMG), and 62–82 (AVPA…LGGL). Residues G80 and T83 each coordinate Na(+). A helical membrane pass occupies residues 101-121 (WGWLALHAAVHVAGSLLMAWI).

Belongs to the fluoride channel Fluc/FEX (TC 1.A.43) family.

The protein resides in the cell inner membrane. It carries out the reaction fluoride(in) = fluoride(out). Na(+) is not transported, but it plays an essential structural role and its presence is essential for fluoride channel function. Functionally, fluoride-specific ion channel. Important for reducing fluoride concentration in the cell, thus reducing its toxicity. The protein is Fluoride-specific ion channel FluC of Aromatoleum aromaticum (strain DSM 19018 / LMG 30748 / EbN1) (Azoarcus sp. (strain EbN1)).